Consider the following 776-residue polypeptide: Probable exo-1,4-beta-xylosidase bxlB (776 aa).

The first 23 residues, 1–23, serve as a signal peptide directing secretion; that stretch reads MVHLSPLLRPLAAFSFFTSLAST. Residues Asn65 and Asn105 are each glycosylated (N-linked (GlcNAc...) asparagine). Asp291 is a catalytic residue. 6 N-linked (GlcNAc...) asparagine glycosylation sites follow: Asn343, Asn410, Asn421, Asn462, Asn623, and Asn766.

It belongs to the glycosyl hydrolase 3 family.

It is found in the secreted. It carries out the reaction Hydrolysis of (1-&gt;4)-beta-D-xylans, to remove successive D-xylose residues from the non-reducing termini.. It functions in the pathway glycan degradation; xylan degradation. Functionally, xylan 1,4-beta-xylosidase involved in the hydrolysis of xylan, a major structural heterogeneous polysaccharide found in plant biomass representing the second most abundant polysaccharide in the biosphere, after cellulose. The chain is Probable exo-1,4-beta-xylosidase bxlB (bxlB) from Aspergillus flavus (strain ATCC 200026 / FGSC A1120 / IAM 13836 / NRRL 3357 / JCM 12722 / SRRC 167).